Consider the following 330-residue polypeptide: ADP-L-glycero-D-manno-heptose-6-epimerase (330 aa).

NADP(+)-binding positions include 11–12 (FI), 32–33 (DN), Lys39, Lys54, 75–79 (EGACS), and Asn92. Tyr139 functions as the Proton acceptor in the catalytic mechanism. NADP(+) is bound at residue Lys143. Position 168 (Asn168) interacts with substrate. NADP(+) contacts are provided by Val169 and Lys177. Catalysis depends on Lys177, which acts as the Proton acceptor. Residues Arg179, His186, 200 to 203 (FGEY), Arg213, and Tyr292 contribute to the substrate site.

The protein belongs to the NAD(P)-dependent epimerase/dehydratase family. HldD subfamily. In terms of assembly, homopentamer. Requires NADP(+) as cofactor.

It catalyses the reaction ADP-D-glycero-beta-D-manno-heptose = ADP-L-glycero-beta-D-manno-heptose. Its pathway is nucleotide-sugar biosynthesis; ADP-L-glycero-beta-D-manno-heptose biosynthesis; ADP-L-glycero-beta-D-manno-heptose from D-glycero-beta-D-manno-heptose 7-phosphate: step 4/4. In terms of biological role, catalyzes the interconversion between ADP-D-glycero-beta-D-manno-heptose and ADP-L-glycero-beta-D-manno-heptose via an epimerization at carbon 6 of the heptose. The chain is ADP-L-glycero-D-manno-heptose-6-epimerase from Burkholderia pseudomallei (strain 1026b).